The primary structure comprises 684 residues: Soluble guanylate cyclase gcy-32 (684 aa).

Position 105 (His-105) interacts with heme. A coiled-coil region spans residues 396–432 (DVEVNLQLEANNEQLETMTRELELERQKTDSILKDML). The Guanylate cyclase domain maps to 454 to 582 (TVMFCDLPAF…ETVTLASQME (129 aa)). Mg(2+) is bound by residues Asp-459 and Asp-503.

The protein belongs to the adenylyl cyclase class-4/guanylyl cyclase family. Heterodimer; with other soluble guanylate cyclases. Requires heme as cofactor. Expressed in a small number of neurons, corresponding to URX, AQR and PQR neurons.

It localises to the cytoplasm. The catalysed reaction is GTP = 3',5'-cyclic GMP + diphosphate. With respect to regulation, may be regulated by molecular oxygen. Probably not activated by nitric oxide (NO). In terms of biological role, synthesizes cyclic GMP (cGMP) from GTP. Influences aerotaxis responses, aggregation and bordering behaviors (gathering around the edge of a bacterial lawn) in combination with other soluble guanylate cyclases. This chain is Soluble guanylate cyclase gcy-32 (gcy-32), found in Caenorhabditis elegans.